The sequence spans 366 residues: Ribosomal RNA large subunit methyltransferase M (366 aa).

S-adenosyl-L-methionine contacts are provided by residues serine 188, 221-224 (CPGG), aspartate 240, aspartate 260, and aspartate 277. Lysine 306 functions as the Proton acceptor in the catalytic mechanism.

The protein belongs to the class I-like SAM-binding methyltransferase superfamily. RNA methyltransferase RlmE family. RlmM subfamily. As to quaternary structure, monomer.

It is found in the cytoplasm. It carries out the reaction cytidine(2498) in 23S rRNA + S-adenosyl-L-methionine = 2'-O-methylcytidine(2498) in 23S rRNA + S-adenosyl-L-homocysteine + H(+). Functionally, catalyzes the 2'-O-methylation at nucleotide C2498 in 23S rRNA. The polypeptide is Ribosomal RNA large subunit methyltransferase M (Escherichia coli O139:H28 (strain E24377A / ETEC)).